Reading from the N-terminus, the 118-residue chain is Small ribosomal subunit protein bS6 (118 aa).

This sequence belongs to the bacterial ribosomal protein bS6 family.

Functionally, binds together with bS18 to 16S ribosomal RNA. This chain is Small ribosomal subunit protein bS6, found in Parabacteroides distasonis (strain ATCC 8503 / DSM 20701 / CIP 104284 / JCM 5825 / NCTC 11152).